The following is a 223-amino-acid chain: Thiamine-phosphate synthase (223 aa).

Residues 37 to 41 (QFREK) and Asp72 contribute to the 4-amino-2-methyl-5-(diphosphooxymethyl)pyrimidine site. 2 residues coordinate Mg(2+): Asp73 and Asp92. Ser110 is a binding site for 4-amino-2-methyl-5-(diphosphooxymethyl)pyrimidine. 136–138 (TQS) is a binding site for 2-[(2R,5Z)-2-carboxy-4-methylthiazol-5(2H)-ylidene]ethyl phosphate. Lys139 contributes to the 4-amino-2-methyl-5-(diphosphooxymethyl)pyrimidine binding site. Residues Gly168 and 188–189 (IS) contribute to the 2-[(2R,5Z)-2-carboxy-4-methylthiazol-5(2H)-ylidene]ethyl phosphate site.

This sequence belongs to the thiamine-phosphate synthase family. Requires Mg(2+) as cofactor.

It carries out the reaction 2-[(2R,5Z)-2-carboxy-4-methylthiazol-5(2H)-ylidene]ethyl phosphate + 4-amino-2-methyl-5-(diphosphooxymethyl)pyrimidine + 2 H(+) = thiamine phosphate + CO2 + diphosphate. The catalysed reaction is 2-(2-carboxy-4-methylthiazol-5-yl)ethyl phosphate + 4-amino-2-methyl-5-(diphosphooxymethyl)pyrimidine + 2 H(+) = thiamine phosphate + CO2 + diphosphate. The enzyme catalyses 4-methyl-5-(2-phosphooxyethyl)-thiazole + 4-amino-2-methyl-5-(diphosphooxymethyl)pyrimidine + H(+) = thiamine phosphate + diphosphate. The protein operates within cofactor biosynthesis; thiamine diphosphate biosynthesis; thiamine phosphate from 4-amino-2-methyl-5-diphosphomethylpyrimidine and 4-methyl-5-(2-phosphoethyl)-thiazole: step 1/1. Functionally, condenses 4-methyl-5-(beta-hydroxyethyl)thiazole monophosphate (THZ-P) and 2-methyl-4-amino-5-hydroxymethyl pyrimidine pyrophosphate (HMP-PP) to form thiamine monophosphate (TMP). This chain is Thiamine-phosphate synthase, found in Streptococcus agalactiae serotype Ia (strain ATCC 27591 / A909 / CDC SS700).